The chain runs to 109 residues: Nucleoid-associated protein PC1_1077 (109 aa).

The protein belongs to the YbaB/EbfC family. In terms of assembly, homodimer.

Its subcellular location is the cytoplasm. It is found in the nucleoid. Functionally, binds to DNA and alters its conformation. May be involved in regulation of gene expression, nucleoid organization and DNA protection. This is Nucleoid-associated protein PC1_1077 from Pectobacterium carotovorum subsp. carotovorum (strain PC1).